Reading from the N-terminus, the 27-residue chain is Conotoxin Bt9.2 (27 aa).

Intrachain disulfides connect C2–C16, C6–C19, and C12–C24. The residue at position 13 (P13) is a 4-hydroxyproline.

Expressed by the venom duct.

The protein resides in the secreted. Probable neurotoxin that inhibits ion channels. In Conus betulinus (Beech cone), this protein is Conotoxin Bt9.2.